The primary structure comprises 132 residues: Interferon-induced transmembrane protein 5 (132 aa).

Residues 1–11 (MDTAYPREDTR) are compositionally biased toward basic and acidic residues. A disordered region spans residues 1-21 (MDTAYPREDTRAPTPSKAGAH). Residues 1-36 (MDTAYPREDTRAPTPSKAGAHTALTLGAPHPPPRDH) are Extracellular-facing. Residues 37 to 57 (LIWSVFSTLYLNLCCLGFLAL) form a helical membrane-spanning segment. 3 S-palmitoyl cysteine lipidation sites follow: cysteine 50, cysteine 51, and cysteine 84. Residues 58-86 (AYSIKARDQKVVGDLEAARRFGSKAKCYN) are Cytoplasmic-facing. A helical membrane pass occupies residues 87 to 107 (ILAAMWTLVPPLLLLGLVVTG). The Extracellular portion of the chain corresponds to 108–132 (ALHLARLAKDSAAFFSTKFDDADYD).

The protein belongs to the CD225/Dispanin family. Interacts with FKBP11. Palmitoylated. Detected in osteoblasts and fibroblasts (at protein level). Detected in bone.

The protein localises to the cell membrane. In terms of biological role, required for normal bone mineralization. This chain is Interferon-induced transmembrane protein 5 (IFITM5), found in Homo sapiens (Human).